The primary structure comprises 354 residues: Guanine nucleotide-binding protein alpha-3 subunit (354 aa).

Glycine 2 is lipidated: N-myristoyl glycine. The S-palmitoyl cysteine moiety is linked to residue cysteine 4. The G-alpha domain maps to 33–354 (KECKILLLGS…TNALKDSGIL (322 aa)). The G1 motif stretch occupies residues 36 to 49 (KILLLGSGESGKST). Residues 41-48 (GSGESGKS), 177-183 (LRARSKT), 202-206 (DVGGQ), 271-274 (NKID), and alanine 326 contribute to the GTP site. Mg(2+) contacts are provided by serine 48 and threonine 183. The tract at residues 175–183 (DVLRARSKT) is G2 motif. Positions 198–207 (IHLFDVGGQR) are G3 motif. The interval 267–274 (ILFLNKID) is G4 motif. Residues 324 to 329 (TQATDT) form a G5 motif region.

This sequence belongs to the G-alpha family. In terms of assembly, g proteins are composed of 3 units; alpha, beta and gamma. The alpha chain contains the guanine nucleotide binding site.

Functionally, guanine nucleotide-binding proteins (G proteins) are involved as modulators or transducers in various transmembrane signaling systems. GPA3 plays an active role in transmission of the pheromone signal. This chain is Guanine nucleotide-binding protein alpha-3 subunit (GPA3), found in Mycosarcoma maydis (Corn smut fungus).